A 96-amino-acid chain; its full sequence is Co-chaperonin GroES (96 aa).

It belongs to the GroES chaperonin family. Heptamer of 7 subunits arranged in a ring. Interacts with the chaperonin GroEL.

The protein localises to the cytoplasm. In terms of biological role, together with the chaperonin GroEL, plays an essential role in assisting protein folding. The GroEL-GroES system forms a nano-cage that allows encapsulation of the non-native substrate proteins and provides a physical environment optimized to promote and accelerate protein folding. GroES binds to the apical surface of the GroEL ring, thereby capping the opening of the GroEL channel. In Neisseria meningitidis serogroup A / serotype 4A (strain DSM 15465 / Z2491), this protein is Co-chaperonin GroES.